The sequence spans 412 residues: Dihydrolipoyllysine-residue acetyltransferase component of pyruvate dehydrogenase complex (412 aa).

The region spanning 2-78 (PIKILMPVLS…PVNSLIAVLS (77 aa)) is the Lipoyl-binding domain. Residue Lys-43 is modified to N6-lipoyllysine. One can recognise a Peripheral subunit-binding (PSBD) domain in the interval 132-169 (FASPLAKRLAKMGNIRLESVKGSGPHGRIVKQDILSYT). His-385 is an active-site residue.

It belongs to the 2-oxoacid dehydrogenase family. As to quaternary structure, forms a 24-polypeptide structural core with octahedral symmetry. (R)-lipoate serves as cofactor.

The enzyme catalyses N(6)-[(R)-dihydrolipoyl]-L-lysyl-[protein] + acetyl-CoA = N(6)-[(R)-S(8)-acetyldihydrolipoyl]-L-lysyl-[protein] + CoA. The pyruvate dehydrogenase complex catalyzes the overall conversion of pyruvate to acetyl-CoA and CO(2). It contains multiple copies of three enzymatic components: pyruvate dehydrogenase (E1), dihydrolipoamide acetyltransferase (E2) and lipoamide dehydrogenase (E3). The protein is Dihydrolipoyllysine-residue acetyltransferase component of pyruvate dehydrogenase complex (pdhC) of Rickettsia felis (strain ATCC VR-1525 / URRWXCal2) (Rickettsia azadi).